The sequence spans 209 residues: MITIALPKGRLAQQTVELLKRASLVDIDISEESRKLIIEDTQNSLRFLMVKPFDVPTYVEYGVADVGVVGKDVLLEMNKRVYELLDLKIGKCFVALAGPKGISEALLKKPDKTIATKFPNIAKEYFENVRGEDVKIIKLNGSVELAPILGLSDMIVDIVESGRTLKENGLEVYEKLYDISARLIANRASLKLKTQIDDIINRLERMIEE.

Belongs to the ATP phosphoribosyltransferase family. Short subfamily. In terms of assembly, heteromultimer composed of HisG and HisZ subunits.

It is found in the cytoplasm. The catalysed reaction is 1-(5-phospho-beta-D-ribosyl)-ATP + diphosphate = 5-phospho-alpha-D-ribose 1-diphosphate + ATP. It functions in the pathway amino-acid biosynthesis; L-histidine biosynthesis; L-histidine from 5-phospho-alpha-D-ribose 1-diphosphate: step 1/9. In terms of biological role, catalyzes the condensation of ATP and 5-phosphoribose 1-diphosphate to form N'-(5'-phosphoribosyl)-ATP (PR-ATP). Has a crucial role in the pathway because the rate of histidine biosynthesis seems to be controlled primarily by regulation of HisG enzymatic activity. The protein is ATP phosphoribosyltransferase of Caldicellulosiruptor bescii (strain ATCC BAA-1888 / DSM 6725 / KCTC 15123 / Z-1320) (Anaerocellum thermophilum).